Consider the following 225-residue polypeptide: 7-cyano-7-deazaguanine synthase (225 aa).

10 to 20 is an ATP binding site; sequence VSGGLDSTTAL. Positions 189, 199, 202, and 205 each coordinate Zn(2+).

It belongs to the QueC family. Zn(2+) serves as cofactor.

It catalyses the reaction 7-carboxy-7-deazaguanine + NH4(+) + ATP = 7-cyano-7-deazaguanine + ADP + phosphate + H2O + H(+). Its pathway is purine metabolism; 7-cyano-7-deazaguanine biosynthesis. Functionally, catalyzes the ATP-dependent conversion of 7-carboxy-7-deazaguanine (CDG) to 7-cyano-7-deazaguanine (preQ(0)). This chain is 7-cyano-7-deazaguanine synthase, found in Saccharophagus degradans (strain 2-40 / ATCC 43961 / DSM 17024).